The following is a 668-amino-acid chain: UvrABC system protein C (668 aa).

Residues 14-91 form the GIY-YIG domain; sequence DSPGCYLHKD…IQRYKPKYNI (78 aa). Residues 196–231 form the UVR domain; sequence KKIVNELEAKMMVSSDNMEFEQAAEYRDVIKAIGTL.

This sequence belongs to the UvrC family. In terms of assembly, interacts with UvrB in an incision complex.

The protein resides in the cytoplasm. Functionally, the UvrABC repair system catalyzes the recognition and processing of DNA lesions. UvrC both incises the 5' and 3' sides of the lesion. The N-terminal half is responsible for the 3' incision and the C-terminal half is responsible for the 5' incision. This chain is UvrABC system protein C, found in Lactococcus lactis subsp. lactis (strain IL1403) (Streptococcus lactis).